The primary structure comprises 394 residues: Maltose permease (394 aa).

The Cytoplasmic portion of the chain corresponds to 1 to 11; it reads MGAAFKWGAAA. Residues 12–38 form a helical membrane-spanning segment; the sequence is RKTVFPLFYFLIFFAFGALFPLLSVYL. At 39–45 the chain is on the extracellular side; sequence QEEARLS. Residues 46-74 form a helical membrane-spanning segment; that stretch reads GAAIGWIMSLPPIVTMAAQPLWGTAADYT. The Cytoplasmic portion of the chain corresponds to 75–78; that stretch reads RKPV. The helical transmembrane segment at 79 to 104 threads the bilayer; the sequence is GLLLAALVLAALFGVMYALAGSYRLF. Over 105–108 the chain is Extracellular; that stretch reads VVLT. The helical transmembrane segment at 109 to 126 threads the bilayer; the sequence is VLLSAMQSAIVPLSDSLA. At 127–137 the chain is on the cytoplasmic side; sequence LRHVHEQGGNY. A helical membrane pass occupies residues 138–160; that stretch reads GAIRLWGSLGFAMAVLAVGWLSD. At 161 to 163 the chain is on the extracellular side; sequence HIA. The chain crosses the membrane as a helical span at residues 164-183; the sequence is FAVIFYAFSLALLTAAALAT. Topologically, residues 184 to 213 are cytoplasmic; that stretch reads RLPRYPMGAPGALTRQDVRGLLASRPFRLL. The helical transmembrane segment at 214–233 threads the bilayer; it reads LVATFLLFGPILANNSYFGL. Over 234-237 the chain is Extracellular; sequence LIHE. A helical transmembrane segment spans residues 238-262; that stretch reads LGGTLTGIGLAFLFAAGSEAPFMKA. Over 263–272 the chain is Cytoplasmic; the sequence is ADRLIGRFGM. Residues 273–292 form a helical membrane-spanning segment; sequence VRLLLLAALISAARWLAYAA. Residues 293–295 are Extracellular-facing; sequence DPP. A helical transmembrane segment spans residues 296 to 318; it reads LWFVYMTTVVQGCSVGLAIPTAL. Residues 319 to 330 are Cytoplasmic-facing; sequence QYARRLAPERVQ. A helical transmembrane segment spans residues 331 to 358; the sequence is STAVALYSAVGNGLGAWFCTLVGGYLLE. The Extracellular segment spans residues 359-361; sequence RWQ. The helical transmembrane segment at 362-382 threads the bilayer; sequence IGAVYLFFSICTIVGVLVLLL. Residues 383–394 lie on the Cytoplasmic side of the membrane; the sequence is LAKRERTAGEEK.

It belongs to the major facilitator superfamily.

It is found in the cell membrane. Functionally, high affinity transport of maltose. The chain is Maltose permease (malA) from Geobacillus stearothermophilus (Bacillus stearothermophilus).